Here is a 254-residue protein sequence, read N- to C-terminus: 4-hydroxy-tetrahydrodipicolinate reductase (254 aa).

Residue 7–12 (GASGRI) participates in NAD(+) binding. Arg35 provides a ligand contact to NADP(+). Residues 91–93 (GTT) and 115–118 (AHNM) each bind NAD(+). The active-site Proton donor/acceptor is the His147. His148 lines the (S)-2,3,4,5-tetrahydrodipicolinate pocket. Lys151 acts as the Proton donor in catalysis. 157-158 (GT) contributes to the (S)-2,3,4,5-tetrahydrodipicolinate binding site.

The protein belongs to the DapB family.

The protein resides in the cytoplasm. It carries out the reaction (S)-2,3,4,5-tetrahydrodipicolinate + NAD(+) + H2O = (2S,4S)-4-hydroxy-2,3,4,5-tetrahydrodipicolinate + NADH + H(+). The catalysed reaction is (S)-2,3,4,5-tetrahydrodipicolinate + NADP(+) + H2O = (2S,4S)-4-hydroxy-2,3,4,5-tetrahydrodipicolinate + NADPH + H(+). The protein operates within amino-acid biosynthesis; L-lysine biosynthesis via DAP pathway; (S)-tetrahydrodipicolinate from L-aspartate: step 4/4. Functionally, catalyzes the conversion of 4-hydroxy-tetrahydrodipicolinate (HTPA) to tetrahydrodipicolinate. This Helicobacter acinonychis (strain Sheeba) protein is 4-hydroxy-tetrahydrodipicolinate reductase.